A 716-amino-acid polypeptide reads, in one-letter code: ATP-dependent DNA helicase DinG (716 aa).

The region spanning 17-294 (ALQEQIPDFI…TCMEQFRPKT (278 aa)) is the Helicase ATP-binding domain. 54–61 (APTGVGKT) provides a ligand contact to ATP. Position 120 (Cys120) interacts with [4Fe-4S] cluster. Residues 131 to 134 (EPTQ) carry the DEAH box motif. 3 residues coordinate [4Fe-4S] cluster: Cys194, Cys199, and Cys205. The short motif at 248 to 251 (DEGH) is the DEAH box element. The Helicase C-terminal domain maps to 517-698 (HIAEMAAFFR…VFPIEQPEVP (182 aa)).

The protein belongs to the helicase family. DinG subfamily. Type 1 sub-subfamily. [4Fe-4S] cluster is required as a cofactor.

The enzyme catalyses Couples ATP hydrolysis with the unwinding of duplex DNA at the replication fork by translocating in the 5'-3' direction. This creates two antiparallel DNA single strands (ssDNA). The leading ssDNA polymer is the template for DNA polymerase III holoenzyme which synthesizes a continuous strand.. The catalysed reaction is ATP + H2O = ADP + phosphate + H(+). DNA-dependent ATPase and 5'-3' DNA helicase. Unwinds D-loops, R-loops, forked DNA and G-quadruplex DNA. This chain is ATP-dependent DNA helicase DinG, found in Escherichia coli O157:H7.